We begin with the raw amino-acid sequence, 189 residues long: Peptidyl-tRNA hydrolase (189 aa).

Y15 is a tRNA binding site. The active-site Proton acceptor is the H20. Residues F66, N68, and N114 each contribute to the tRNA site.

It belongs to the PTH family. As to quaternary structure, monomer.

It is found in the cytoplasm. The enzyme catalyses an N-acyl-L-alpha-aminoacyl-tRNA + H2O = an N-acyl-L-amino acid + a tRNA + H(+). In terms of biological role, hydrolyzes ribosome-free peptidyl-tRNAs (with 1 or more amino acids incorporated), which drop off the ribosome during protein synthesis, or as a result of ribosome stalling. Catalyzes the release of premature peptidyl moieties from peptidyl-tRNA molecules trapped in stalled 50S ribosomal subunits, and thus maintains levels of free tRNAs and 50S ribosomes. The polypeptide is Peptidyl-tRNA hydrolase (Streptococcus suis (strain 98HAH33)).